Here is a 288-residue protein sequence, read N- to C-terminus: Putative aryl-alcohol dehydrogenase AAD10 (288 aa).

The protein belongs to the aldo/keto reductase family. Aldo/keto reductase 2 subfamily.

The chain is Putative aryl-alcohol dehydrogenase AAD10 (AAD10) from Saccharomyces cerevisiae (strain ATCC 204508 / S288c) (Baker's yeast).